The chain runs to 240 residues: 2,3-bisphosphoglycerate-dependent phosphoglycerate mutase (240 aa).

Residues 5–12, 18–19, Arg57, 84–87, Lys95, 111–112, and 180–181 contribute to the substrate site; these read RHGESVWN, TG, ERHY, RR, and GN. His6 acts as the Tele-phosphohistidine intermediate in catalysis. Glu84 (proton donor/acceptor) is an active-site residue.

The protein belongs to the phosphoglycerate mutase family. BPG-dependent PGAM subfamily. In terms of assembly, homodimer.

It catalyses the reaction (2R)-2-phosphoglycerate = (2R)-3-phosphoglycerate. Its pathway is carbohydrate degradation; glycolysis; pyruvate from D-glyceraldehyde 3-phosphate: step 3/5. Catalyzes the interconversion of 2-phosphoglycerate and 3-phosphoglycerate. The polypeptide is 2,3-bisphosphoglycerate-dependent phosphoglycerate mutase (Nitrosococcus oceani (strain ATCC 19707 / BCRC 17464 / JCM 30415 / NCIMB 11848 / C-107)).